Reading from the N-terminus, the 446-residue chain is N-succinylarginine dihydrolase (446 aa).

Substrate is bound by residues 19 to 28 (AGLSFGNVAS), asparagine 110, and 137 to 138 (HR). Residue glutamate 174 is part of the active site. Arginine 213 contributes to the substrate binding site. Histidine 249 is an active-site residue. Substrate contacts are provided by aspartate 251 and asparagine 364. The active-site Nucleophile is cysteine 370.

It belongs to the succinylarginine dihydrolase family. As to quaternary structure, homodimer.

It carries out the reaction N(2)-succinyl-L-arginine + 2 H2O + 2 H(+) = N(2)-succinyl-L-ornithine + 2 NH4(+) + CO2. It functions in the pathway amino-acid degradation; L-arginine degradation via AST pathway; L-glutamate and succinate from L-arginine: step 2/5. In terms of biological role, catalyzes the hydrolysis of N(2)-succinylarginine into N(2)-succinylornithine, ammonia and CO(2). The chain is N-succinylarginine dihydrolase from Burkholderia mallei (strain NCTC 10247).